The primary structure comprises 310 residues: tRNA dimethylallyltransferase (310 aa).

10 to 17 (GPTAVGKS) is an ATP binding site. Position 12–17 (12–17 (TAVGKS)) interacts with substrate. Positions 35–38 (DSMQ) are interaction with substrate tRNA.

This sequence belongs to the IPP transferase family. In terms of assembly, monomer. Mg(2+) serves as cofactor.

It carries out the reaction adenosine(37) in tRNA + dimethylallyl diphosphate = N(6)-dimethylallyladenosine(37) in tRNA + diphosphate. Its function is as follows. Catalyzes the transfer of a dimethylallyl group onto the adenine at position 37 in tRNAs that read codons beginning with uridine, leading to the formation of N6-(dimethylallyl)adenosine (i(6)A). This chain is tRNA dimethylallyltransferase, found in Clostridium perfringens (strain 13 / Type A).